The following is a 119-amino-acid chain: Autophagy-related protein 8 (119 aa).

Gly116 is lipidated: Phosphatidylethanolamine amidated glycine. The propeptide at 117–119 (EAL) is removed in mature form.

It belongs to the ATG8 family. As to quaternary structure, conjugation to phosphatidylethanolamine (PE) leads to homodimerization. Interacts with ATG1, ATG3, ATG4, ATG7 and ATG12. Post-translationally, the C-terminal Glu-117, Ala-118 and Leu-119 residues of ATG8 are removed by ATG4 to expose Gly-116 at the C-terminus. This Gly-116 forms then a thioester bond with ATG7 (E1-like activating enzyme) before being transferred to ATG3 (the specific E2 conjugating enzyme), in order to be finally amidated with phosphatidylethanolamine. This lipid modification anchors ATG8 to membranes and can be reversed by ATG4, releasing soluble ATG8.

Its subcellular location is the cytoplasmic vesicle. It localises to the cvt vesicle membrane. It is found in the autophagosome membrane. The protein localises to the vacuole membrane. In terms of biological role, ubiquitin-like modifier involved in cytoplasm to vacuole transport (Cvt) vesicles and autophagosome formation. With ATG4, mediates the delivery of the vesicles and autophagosomes to the vacuole via the microtubule cytoskeleton. Required for selective autophagic degradation of the nucleus (nucleophagy) as well as for mitophagy which contributes to regulate mitochondrial quantity and quality by eliminating the mitochondria to a basal level to fulfill cellular energy requirements and preventing excess ROS production. Also participates in membrane fusion events that take place in the early secretory pathway. Also involved in endoplasmic reticulum-specific autophagic process and is essential for the survival of cells subjected to severe ER stress. The ATG8-PE conjugate mediates tethering between adjacent membranes and stimulates membrane hemifusion, leading to expansion of the autophagosomal membrane during autophagy. Moreover not only conjugation, but also subsequent ATG8-PE deconjugation is an important step required to facilitate multiple events during macroautophagy, and especially for efficient autophagosome biogenesis, the assembly of ATG9-containing tubulovesicular clusters into phagophores/autophagosomes, and for the disassembly of PAS-associated ATG components. Autophagy is required for conidiation, aerial mycelial growth, and pseudothecia formation, but not for host invasion. This Cochliobolus heterostrophus (strain C4 / ATCC 48331 / race T) (Southern corn leaf blight fungus) protein is Autophagy-related protein 8.